Reading from the N-terminus, the 125-residue chain is UPF0251 protein DSY3441 (125 aa).

It belongs to the UPF0251 family.

This chain is UPF0251 protein DSY3441, found in Desulfitobacterium hafniense (strain Y51).